The primary structure comprises 668 residues: UvrABC system protein B (668 aa).

One can recognise a Helicase ATP-binding domain in the interval 25-413 (NGINTGLQHQ…QNTVQQVIRP (389 aa)). An ATP-binding site is contributed by 38–45 (GVTGSGKT). The Beta-hairpin motif lies at 91-114 (YYDYYQPEAYIAASDTYIEKDSSV). A Helicase C-terminal domain is found at 429-595 (QVEDALSEIN…TIIKNIDDML (167 aa)). Residues 629–664 (TKVIKALEKRMRAYAKELEFEKATTIRDKITEVKQK) form the UVR domain.

It belongs to the UvrB family. In terms of assembly, forms a heterotetramer with UvrA during the search for lesions. Interacts with UvrC in an incision complex.

The protein resides in the cytoplasm. Its function is as follows. The UvrABC repair system catalyzes the recognition and processing of DNA lesions. A damage recognition complex composed of 2 UvrA and 2 UvrB subunits scans DNA for abnormalities. Upon binding of the UvrA(2)B(2) complex to a putative damaged site, the DNA wraps around one UvrB monomer. DNA wrap is dependent on ATP binding by UvrB and probably causes local melting of the DNA helix, facilitating insertion of UvrB beta-hairpin between the DNA strands. Then UvrB probes one DNA strand for the presence of a lesion. If a lesion is found the UvrA subunits dissociate and the UvrB-DNA preincision complex is formed. This complex is subsequently bound by UvrC and the second UvrB is released. If no lesion is found, the DNA wraps around the other UvrB subunit that will check the other stand for damage. This chain is UvrABC system protein B, found in Francisella tularensis subsp. tularensis (strain SCHU S4 / Schu 4).